A 632-amino-acid polypeptide reads, in one-letter code: Arginine--tRNA ligase (632 aa).

The 'HIGH' region signature appears at 120–130 (ANPIHPLHIGH).

Belongs to the class-I aminoacyl-tRNA synthetase family.

The protein localises to the cytoplasm. It carries out the reaction tRNA(Arg) + L-arginine + ATP = L-arginyl-tRNA(Arg) + AMP + diphosphate. This Pyrobaculum islandicum (strain DSM 4184 / JCM 9189 / GEO3) protein is Arginine--tRNA ligase.